Reading from the N-terminus, the 610-residue chain is UvrABC system protein C (610 aa).

The GIY-YIG domain maps to 16–94 (SQPGVYRMYD…IKLYQPRYNV (79 aa)). A UVR domain is found at 204–239 (DQVLNQLVARMEQASGDLRFEEAGRLRDQIQAVRRV).

This sequence belongs to the UvrC family. In terms of assembly, interacts with UvrB in an incision complex.

It localises to the cytoplasm. Functionally, the UvrABC repair system catalyzes the recognition and processing of DNA lesions. UvrC both incises the 5' and 3' sides of the lesion. The N-terminal half is responsible for the 3' incision and the C-terminal half is responsible for the 5' incision. The chain is UvrABC system protein C from Erwinia tasmaniensis (strain DSM 17950 / CFBP 7177 / CIP 109463 / NCPPB 4357 / Et1/99).